An 86-amino-acid chain; its full sequence is Cerebrin prohormone (86 aa).

A signal peptide spans 1 to 27; sequence MFGYRSLLVLLVTLSLCLLLQSSHCSA. Residues 28 to 64 constitute a propeptide that is removed on maturation; the sequence is VRTYGNDLDARARREIISLAARLIKLSMYGPEDDSFV. Isoleucine amide is present on isoleucine 83.

In terms of tissue distribution, expressed only in cerebral ganglion.

Its subcellular location is the secreted. May function as a hormone and may play a neuromodulatory role. The sequence is that of Cerebrin prohormone (CBPH) from Aplysia californica (California sea hare).